We begin with the raw amino-acid sequence, 265 residues long: uncharacterized protein (265 aa).

A disordered region spans residues 1–160 (MDKSKNLFDL…STEPVVAAPV (160 aa)). A compositionally biased stretch (low complexity) spans 28–42 (AAAAPVAAKKPVAPK). 2 stretches are compositionally biased toward basic and acidic residues: residues 73–85 (SEER…DSKS) and 102–119 (RQFD…ENKK).

Belongs to the SERBP1-HABP4 family.

In terms of biological role, ribosome-binding protein that acts as a regulator of mRNA translation by promoting ribosome inactivation. This is an uncharacterized protein from Dictyostelium discoideum (Social amoeba).